The following is a 569-amino-acid chain: Undecaprenyl phosphate-alpha-4-amino-4-deoxy-L-arabinose arabinosyl transferase 1 (569 aa).

12 consecutive transmembrane segments (helical) span residues 27 to 47 (GLIL…GLWI), 98 to 120 (LFGV…YLLA), 129 to 149 (INAA…QAGY), 151 to 171 (NLDP…WFAI), 194 to 214 (LMTK…PYML), 225 to 245 (YGLV…LAVH), 275 to 295 (PWWF…LLLP), 311 to 331 (AYLA…SGKL), 334 to 354 (YIMP…VKWL), 366 to 386 (GVFN…LQAT), 396 to 416 (FSLS…ALQV), and 420 to 440 (LTLW…LPAA).

The protein belongs to the glycosyltransferase 83 family.

Its subcellular location is the cell inner membrane. It catalyses the reaction 4-amino-4-deoxy-alpha-L-arabinopyranosyl di-trans,octa-cis-undecaprenyl phosphate + lipid IVA = lipid IIA + di-trans,octa-cis-undecaprenyl phosphate.. Its pathway is lipopolysaccharide metabolism; 4-amino-4-deoxy-beta-L-arabinose-lipid A biosynthesis. In terms of biological role, catalyzes the transfer of the L-Ara4N moiety of the glycolipid undecaprenyl phosphate-alpha-L-Ara4N to lipid A. The modified arabinose is attached to lipid A and is required for resistance to polymyxin and cationic antimicrobial peptides. The polypeptide is Undecaprenyl phosphate-alpha-4-amino-4-deoxy-L-arabinose arabinosyl transferase 1 (Pseudomonas fluorescens (strain Pf0-1)).